Here is a 292-residue protein sequence, read N- to C-terminus: 4-hydroxy-tetrahydrodipicolinate synthase (292 aa).

T45 serves as a coordination point for pyruvate. Y133 (proton donor/acceptor) is an active-site residue. K161 acts as the Schiff-base intermediate with substrate in catalysis. I203 serves as a coordination point for pyruvate.

The protein belongs to the DapA family. As to quaternary structure, homotetramer; dimer of dimers.

It localises to the cytoplasm. The catalysed reaction is L-aspartate 4-semialdehyde + pyruvate = (2S,4S)-4-hydroxy-2,3,4,5-tetrahydrodipicolinate + H2O + H(+). It functions in the pathway amino-acid biosynthesis; L-lysine biosynthesis via DAP pathway; (S)-tetrahydrodipicolinate from L-aspartate: step 3/4. Its function is as follows. Catalyzes the condensation of (S)-aspartate-beta-semialdehyde [(S)-ASA] and pyruvate to 4-hydroxy-tetrahydrodipicolinate (HTPA). The polypeptide is 4-hydroxy-tetrahydrodipicolinate synthase (Shigella flexneri).